Reading from the N-terminus, the 387-residue chain is 3-ketoacyl-CoA thiolase (387 aa).

The active-site Acyl-thioester intermediate is Cys-91. Catalysis depends on proton acceptor residues His-343 and Cys-373.

Belongs to the thiolase-like superfamily. Thiolase family. In terms of assembly, heterotetramer of two alpha chains (FadB) and two beta chains (FadA).

The protein localises to the cytoplasm. The catalysed reaction is an acyl-CoA + acetyl-CoA = a 3-oxoacyl-CoA + CoA. Its pathway is lipid metabolism; fatty acid beta-oxidation. Its function is as follows. Catalyzes the final step of fatty acid oxidation in which acetyl-CoA is released and the CoA ester of a fatty acid two carbons shorter is formed. The polypeptide is 3-ketoacyl-CoA thiolase (Shigella dysenteriae serotype 1 (strain Sd197)).